A 166-amino-acid polypeptide reads, in one-letter code: MSEPTSRRPAYARLLDRAVRILAVRDHSEQELRRKLSAPVMGKNGPEEIDATADDYERVIAWCHEHHYLDDERFVMRFIASRSRKGYGPARICQELNQKGISRESTEKAMRECEIDWSEMAHEQAVRKYGEPLPSNFSEKVKVQRFLLYRGYLMDDIQQIWRNFAD.

Belongs to the RecX family.

It is found in the cytoplasm. Modulates RecA activity. The polypeptide is Regulatory protein RecX (Salmonella choleraesuis (strain SC-B67)).